The primary structure comprises 510 residues: ATP synthase subunit alpha (510 aa).

An ATP-binding site is contributed by G170–T177.

This sequence belongs to the ATPase alpha/beta chains family. As to quaternary structure, F-type ATPases have 2 components, CF(1) - the catalytic core - and CF(0) - the membrane proton channel. CF(1) has five subunits: alpha(3), beta(3), gamma(1), delta(1), epsilon(1). CF(0) has three main subunits: a(1), b(2) and c(9-12). The alpha and beta chains form an alternating ring which encloses part of the gamma chain. CF(1) is attached to CF(0) by a central stalk formed by the gamma and epsilon chains, while a peripheral stalk is formed by the delta and b chains.

Its subcellular location is the cell inner membrane. It carries out the reaction ATP + H2O + 4 H(+)(in) = ADP + phosphate + 5 H(+)(out). In terms of biological role, produces ATP from ADP in the presence of a proton gradient across the membrane. The alpha chain is a regulatory subunit. The sequence is that of ATP synthase subunit alpha from Dictyoglomus thermophilum (strain ATCC 35947 / DSM 3960 / H-6-12).